The chain runs to 282 residues: NADPH-dependent 7-cyano-7-deazaguanine reductase (282 aa).

Residue 88–90 (IES) coordinates substrate. An NADPH-binding site is contributed by 90-91 (SK). Catalysis depends on Cys-190, which acts as the Thioimide intermediate. The active-site Proton donor is Asp-197. 229-230 (HE) provides a ligand contact to substrate. 258 to 259 (RG) serves as a coordination point for NADPH.

This sequence belongs to the GTP cyclohydrolase I family. QueF type 2 subfamily. In terms of assembly, homodimer.

The protein resides in the cytoplasm. It catalyses the reaction 7-aminomethyl-7-carbaguanine + 2 NADP(+) = 7-cyano-7-deazaguanine + 2 NADPH + 3 H(+). Its pathway is tRNA modification; tRNA-queuosine biosynthesis. Its function is as follows. Catalyzes the NADPH-dependent reduction of 7-cyano-7-deazaguanine (preQ0) to 7-aminomethyl-7-deazaguanine (preQ1). In Salmonella paratyphi B (strain ATCC BAA-1250 / SPB7), this protein is NADPH-dependent 7-cyano-7-deazaguanine reductase.